We begin with the raw amino-acid sequence, 632 residues long: 1-deoxy-D-xylulose-5-phosphate synthase (632 aa).

Thiamine diphosphate contacts are provided by residues His87 and 128–130; that span reads GHS. Position 159 (Asp159) interacts with Mg(2+). Thiamine diphosphate-binding positions include 160 to 161, Asn188, Phe295, and Glu377; that span reads GA. Asn188 is a Mg(2+) binding site.

It belongs to the transketolase family. DXPS subfamily. Homodimer. Mg(2+) serves as cofactor. The cofactor is thiamine diphosphate.

It carries out the reaction D-glyceraldehyde 3-phosphate + pyruvate + H(+) = 1-deoxy-D-xylulose 5-phosphate + CO2. It participates in metabolic intermediate biosynthesis; 1-deoxy-D-xylulose 5-phosphate biosynthesis; 1-deoxy-D-xylulose 5-phosphate from D-glyceraldehyde 3-phosphate and pyruvate: step 1/1. In terms of biological role, catalyzes the acyloin condensation reaction between C atoms 2 and 3 of pyruvate and glyceraldehyde 3-phosphate to yield 1-deoxy-D-xylulose-5-phosphate (DXP). The polypeptide is 1-deoxy-D-xylulose-5-phosphate synthase (Stutzerimonas stutzeri (strain A1501) (Pseudomonas stutzeri)).